The following is a 699-amino-acid chain: Elongation factor G (699 aa).

In terms of domain architecture, tr-type G spans 10–292 (NRTRNIGIMA…AVIDYLPSPT (283 aa)). Residues 19-26 (AHIDAGKT), 90-94 (DTPGH), and 144-147 (NKMD) contribute to the GTP site. The interval 292–312 (TDVPAIRGEEDDGSEGSRSAS) is disordered.

It belongs to the TRAFAC class translation factor GTPase superfamily. Classic translation factor GTPase family. EF-G/EF-2 subfamily.

It is found in the cytoplasm. Functionally, catalyzes the GTP-dependent ribosomal translocation step during translation elongation. During this step, the ribosome changes from the pre-translocational (PRE) to the post-translocational (POST) state as the newly formed A-site-bound peptidyl-tRNA and P-site-bound deacylated tRNA move to the P and E sites, respectively. Catalyzes the coordinated movement of the two tRNA molecules, the mRNA and conformational changes in the ribosome. This chain is Elongation factor G, found in Coxiella burnetii (strain RSA 331 / Henzerling II).